The chain runs to 225 residues: 7-cyano-7-deazaguanine synthase (225 aa).

10–20 (VSGGLDSTTAL) is a binding site for ATP. Positions 189, 199, 202, and 205 each coordinate Zn(2+).

The protein belongs to the QueC family. It depends on Zn(2+) as a cofactor.

It carries out the reaction 7-carboxy-7-deazaguanine + NH4(+) + ATP = 7-cyano-7-deazaguanine + ADP + phosphate + H2O + H(+). It functions in the pathway purine metabolism; 7-cyano-7-deazaguanine biosynthesis. Functionally, catalyzes the ATP-dependent conversion of 7-carboxy-7-deazaguanine (CDG) to 7-cyano-7-deazaguanine (preQ(0)). The chain is 7-cyano-7-deazaguanine synthase from Saccharophagus degradans (strain 2-40 / ATCC 43961 / DSM 17024).